The following is a 218-amino-acid chain: tRNA (guanine-N(7)-)-methyltransferase (218 aa).

The interval 1-25 is disordered; the sequence is MRLKNKPWANELVEEHPESALDRPN. Residues 13–25 are compositionally biased toward basic and acidic residues; the sequence is VEEHPESALDRPN. S-adenosyl-L-methionine contacts are provided by Glu-45, Glu-70, Asp-97, and Asp-119. Asp-119 is an active-site residue. A substrate-binding site is contributed by Lys-123. The segment at 125 to 130 is interaction with RNA; the sequence is RHEKRR. Substrate contacts are provided by residues Asp-155 and 195-198; that span reads TEYE.

This sequence belongs to the class I-like SAM-binding methyltransferase superfamily. TrmB family.

It catalyses the reaction guanosine(46) in tRNA + S-adenosyl-L-methionine = N(7)-methylguanosine(46) in tRNA + S-adenosyl-L-homocysteine. Its pathway is tRNA modification; N(7)-methylguanine-tRNA biosynthesis. Functionally, catalyzes the formation of N(7)-methylguanine at position 46 (m7G46) in tRNA. The protein is tRNA (guanine-N(7)-)-methyltransferase of Lactobacillus delbrueckii subsp. bulgaricus (strain ATCC BAA-365 / Lb-18).